The chain runs to 153 residues: 3-hydroxyacyl-[acyl-carrier-protein] dehydratase FabZ (153 aa).

His54 is a catalytic residue.

It belongs to the thioester dehydratase family. FabZ subfamily.

It is found in the cytoplasm. It carries out the reaction a (3R)-hydroxyacyl-[ACP] = a (2E)-enoyl-[ACP] + H2O. In terms of biological role, involved in unsaturated fatty acids biosynthesis. Catalyzes the dehydration of short chain beta-hydroxyacyl-ACPs and long chain saturated and unsaturated beta-hydroxyacyl-ACPs. The polypeptide is 3-hydroxyacyl-[acyl-carrier-protein] dehydratase FabZ (Chlamydia pneumoniae (Chlamydophila pneumoniae)).